A 107-amino-acid chain; its full sequence is Nucleoid-associated protein RP866 (107 aa).

Belongs to the YbaB/EbfC family. Homodimer.

It localises to the cytoplasm. Its subcellular location is the nucleoid. Functionally, binds to DNA and alters its conformation. May be involved in regulation of gene expression, nucleoid organization and DNA protection. This is Nucleoid-associated protein RP866 from Rickettsia prowazekii (strain Madrid E).